A 216-amino-acid chain; its full sequence is MMNTIIGLILAYLLGSIPTGLWIGQIFFKKNLREYGSGNTGTTNTFRILGKTAGTATFAIDFLKGTAATLLPFFLHIEGVSPLVFGLLAVIGHTFPIFAGFKGGKAVATSAGVVLGFSPAFFVYLIVIFASILYLGSMISLASVLSAVIAILSALLFPLVGFILPSYDLFFTLIIIALALIIILRHKDNIQRIKQKKENLIPWGLNITHQNPEAKK.

5 helical membrane-spanning segments follow: residues 4 to 24, 71 to 91, 113 to 133, 144 to 164, and 165 to 185; these read TIIG…LWIG, LPFF…LAVI, VVLG…ASIL, VLSA…GFIL, and PSYD…IILR.

This sequence belongs to the PlsY family. In terms of assembly, probably interacts with PlsX.

The protein resides in the cell membrane. The enzyme catalyses an acyl phosphate + sn-glycerol 3-phosphate = a 1-acyl-sn-glycero-3-phosphate + phosphate. Its pathway is lipid metabolism; phospholipid metabolism. Catalyzes the transfer of an acyl group from acyl-phosphate (acyl-PO(4)) to glycerol-3-phosphate (G3P) to form lysophosphatidic acid (LPA). This enzyme utilizes acyl-phosphate as fatty acyl donor, but not acyl-CoA or acyl-ACP. The chain is Glycerol-3-phosphate acyltransferase from Streptococcus sanguinis (strain SK36).